A 293-amino-acid chain; its full sequence is 4-diphosphocytidyl-2-C-methyl-D-erythritol kinase (293 aa).

Lys10 is an active-site residue. 94–104 is an ATP binding site; that stretch reads PVSAGLAGGSS. Asp136 is an active-site residue.

Belongs to the GHMP kinase family. IspE subfamily.

The catalysed reaction is 4-CDP-2-C-methyl-D-erythritol + ATP = 4-CDP-2-C-methyl-D-erythritol 2-phosphate + ADP + H(+). Its pathway is isoprenoid biosynthesis; isopentenyl diphosphate biosynthesis via DXP pathway; isopentenyl diphosphate from 1-deoxy-D-xylulose 5-phosphate: step 3/6. In terms of biological role, catalyzes the phosphorylation of the position 2 hydroxy group of 4-diphosphocytidyl-2C-methyl-D-erythritol. The protein is 4-diphosphocytidyl-2-C-methyl-D-erythritol kinase of Listeria monocytogenes serotype 4b (strain CLIP80459).